The primary structure comprises 127 residues: Large ribosomal subunit protein bL12 (127 aa).

The protein belongs to the bacterial ribosomal protein bL12 family. As to quaternary structure, homodimer. Part of the ribosomal stalk of the 50S ribosomal subunit. Forms a multimeric L10(L12)X complex, where L10 forms an elongated spine to which 2 to 4 L12 dimers bind in a sequential fashion. Binds GTP-bound translation factors.

Forms part of the ribosomal stalk which helps the ribosome interact with GTP-bound translation factors. Is thus essential for accurate translation. This Rhizobium etli (strain ATCC 51251 / DSM 11541 / JCM 21823 / NBRC 15573 / CFN 42) protein is Large ribosomal subunit protein bL12.